Reading from the N-terminus, the 192-residue chain is Riboflavin kinase (192 aa).

Positions 47 and 49 each coordinate Mg(2+). The active-site Nucleophile is Glu-129.

It belongs to the flavokinase family. Zn(2+) serves as cofactor. It depends on Mg(2+) as a cofactor.

It catalyses the reaction riboflavin + ATP = FMN + ADP + H(+). The protein operates within cofactor biosynthesis; FMN biosynthesis; FMN from riboflavin (ATP route): step 1/1. Catalyzes the phosphorylation of riboflavin (vitamin B2) to form flavin mononucleotide (FMN) coenzyme. This is Riboflavin kinase (FMN1) from Yarrowia lipolytica (strain CLIB 122 / E 150) (Yeast).